The sequence spans 295 residues: Protoheme IX farnesyltransferase (295 aa).

The next 9 helical transmembrane spans lie at 24 to 43 (IMYL…PGSI), 47 to 69 (LALI…NMWY), 94 to 114 (SALE…AIAV), 117 to 137 (ISAI…TIWL), 144 to 164 (NIVI…AVVT), 171 to 191 (GFVL…ALSL), 216 to 236 (KYIL…ALFL), 241 to 261 (FYLG…VSIM), and 272 to 292 (MFSY…LCSI).

The protein belongs to the UbiA prenyltransferase family. Protoheme IX farnesyltransferase subfamily.

It is found in the cell membrane. The enzyme catalyses heme b + (2E,6E)-farnesyl diphosphate + H2O = Fe(II)-heme o + diphosphate. It participates in porphyrin-containing compound metabolism; heme O biosynthesis; heme O from protoheme: step 1/1. Converts heme B (protoheme IX) to heme O by substitution of the vinyl group on carbon 2 of heme B porphyrin ring with a hydroxyethyl farnesyl side group. This is Protoheme IX farnesyltransferase from Wolbachia sp. subsp. Brugia malayi (strain TRS).